The sequence spans 46 residues: Elongation factor Tu (46 aa).

The segment covering 1 to 10 has biased composition (basic and acidic residues); the sequence is MAKGKFERSK. The interval 1-20 is disordered; that stretch reads MAKGKFERSKPHVNVGTIGH. GTP is bound at residue 19–26; the sequence is GHVDHGKT.

This sequence belongs to the GTP-binding elongation factor family. EF-Tu/EF-1A subfamily. In terms of assembly, monomer.

The protein localises to the cytoplasm. Its function is as follows. This protein promotes the GTP-dependent binding of aminoacyl-tRNA to the A-site of ribosomes during protein biosynthesis. This chain is Elongation factor Tu (tufA), found in Eikenella corrodens.